Here is a 173-residue protein sequence, read N- to C-terminus: Large ribosomal subunit protein uL29c (173 aa).

Residues M1–M60 constitute a chloroplast transit peptide. The segment at K143–A173 is disordered. Residue S172 is modified to Phosphoserine.

The protein belongs to the universal ribosomal protein uL29 family. As to quaternary structure, part of the 50S ribosomal subunit.

It localises to the plastid. Its subcellular location is the chloroplast. The polypeptide is Large ribosomal subunit protein uL29c (RPL29) (Arabidopsis thaliana (Mouse-ear cress)).